A 206-amino-acid polypeptide reads, in one-letter code: Shieldin complex subunit 1 (206 aa).

Positions 27-94 (SSYEASQRVS…GQLETNEEED (68 aa)) are disordered. The segment covering 32–55 (SQRVSQGSSNSLSSLESHPFLSSS) has biased composition (low complexity). A compositionally biased stretch (polar residues) spans 56-74 (TTDPDSNSLNTEQKGSWDS).

Component of the shieldin complex, consisting of SHLD1, SHLD2, SHLD3 and MAD2L2/REV7. Within the complex, SHLD2 forms a scaffold which interacts with a SHLD3-MAD2L2 subcomplex via its N-terminus, and with SHLD1 via its C-terminus. Interacts with ASTE1.

The protein resides in the chromosome. In terms of biological role, component of the shieldin complex, which plays an important role in repair of DNA double-stranded breaks (DSBs). During G1 and S phase of the cell cycle, the complex functions downstream of TP53BP1 to promote non-homologous end joining (NHEJ) and suppress DNA end resection. Mediates various NHEJ-dependent processes including immunoglobulin class-switch recombination, and fusion of unprotected telomeres. This chain is Shieldin complex subunit 1, found in Mus musculus (Mouse).